Consider the following 493-residue polypeptide: Amphoterin-induced protein 1 (493 aa).

An N-terminal signal peptide occupies residues 1–27; that stretch reads MHPHRDPRGLWLLLPSLSLLLFEVARA. Positions 28–61 constitute an LRRNT domain; sequence GRAVVSCPAACLCASNILSCSKQQLPNVPHSLPS. Residues 28 to 372 are Extracellular-facing; sequence GRAVVSCPAA…LHGHHDTLNT (345 aa). 2 disulfide bridges follow: C34–C40 and C38–C47. 6 LRR repeats span residues 62-83, 87-108, 111-132, 135-156, 159-179, and 186-206; these read YTAL…WTPT, QLHS…AFSP, NLRY…LFSD, VLEV…AFDD, QLQK…ELVK, and KLTL…PDLQ. N72 carries N-linked (GlcNAc...) asparagine glycosylation. The region spanning 221–272 is the LRRCT domain; it reads NPLNCDCELYQLFSHWQYRQLSSVMDFQEDLYCMNSKKLHNVFNLSFLNCGE. Disulfide bonds link C225/C253, C227/C270, and C290/C341. N-linked (GlcNAc...) asparagine glycosylation is found at N264, N315, N349, and N360. The 85-residue stretch at 269 to 353 folds into the Ig-like C2-type domain; the sequence is NCGEYKERAW…MGETFNETLS (85 aa). Residues 373–393 form a helical membrane-spanning segment; that stretch reads AYTTLVGCILSVVLVLIYLYL. Topologically, residues 394–493 are cytoplasmic; the sequence is TPCRCWCRGV…SVFSDTPIVV (100 aa). Residues 405 to 493 form a disordered region; it reads KPSSHQGDSL…SVFSDTPIVV (89 aa). Over residues 408-424 the composition is skewed to polar residues; that stretch reads SHQGDSLSSSMLSTTPN. Residues 431-442 are compositionally biased toward basic and acidic residues; it reads GDKDDGFDRRVA. 2 positions are modified to phosphoserine: S477 and S481.

This sequence belongs to the immunoglobulin superfamily. AMIGO family. In terms of assembly, homodimer, and heterodimer with AMIGO2 and AMIGO3. Interacts with KCNB1.

It is found in the cell membrane. Its subcellular location is the perikaryon. The protein localises to the cell projection. It localises to the dendrite. The protein resides in the axon. Promotes growth and fasciculation of neurites from cultured hippocampal neurons. May be involved in fasciculation as well as myelination of developing neural axons. May have a role in regeneration as well as neural plasticity in the adult nervous system. May mediate homophilic as well as heterophilic cell-cell interaction and contribute to signal transduction through its intracellular domain. Assembled with KCNB1 modulates the gating characteristics of the delayed rectifier voltage-dependent potassium channel KCNB1. In Homo sapiens (Human), this protein is Amphoterin-induced protein 1.